The following is a 403-amino-acid chain: D-galactonate dehydratase family member RspA (403 aa).

Substrate contacts are provided by asparagine 37 and histidine 122. The active-site Proton donor/acceptor is tyrosine 159. Aspartate 211 is a binding site for Mg(2+). The active-site Proton donor/acceptor is histidine 213. Residues glutamate 237 and glutamate 263 each contribute to the Mg(2+) site. The substrate site is built by glutamate 263, arginine 284, histidine 313, aspartate 317, and glutamate 340.

This sequence belongs to the mandelate racemase/muconate lactonizing enzyme family. GalD subfamily. The cofactor is Mg(2+).

The enzyme catalyses D-mannonate = 2-dehydro-3-deoxy-D-gluconate + H2O. The catalysed reaction is D-gluconate = 2-dehydro-3-deoxy-D-gluconate + H2O. Has low dehydratase activity with D-mannonate and D-gluconate, suggesting that these are not physiological substrates and that it has no significant role in the in vivo degradation of these compounds. Has no detectable activity with a panel of 70 other acid sugars (in vitro). In Halomonas elongata (strain ATCC 33173 / DSM 2581 / NBRC 15536 / NCIMB 2198 / 1H9), this protein is D-galactonate dehydratase family member RspA (rspA).